The chain runs to 203 residues: MIPNRDTIEQKQLGWVELITGCMFAGKTEEFIKRLRRHAFAKRNVIAFKPVIDTRYAVNEVASHAGTLLPSIPVNSTAELKEKLEAKILEKKVDVVGIDEIQFFDEAIVDYIEELADRGIIVIVTGLDKDFRSQPFKNVDRILPLAEMVDKLTAICQKCGNFANRTQRIIDGKPADWNSPLILVDGNDSYEARCRNCYQIEKG.

Residues 21 to 28 and 99 to 102 each bind ATP; these read GCMFAGKT and DEIQ. Residue E100 is the Proton acceptor of the active site. The Zn(2+) site is built by C156, C159, C194, and C197.

This sequence belongs to the thymidine kinase family. Homotetramer.

Its subcellular location is the cytoplasm. It carries out the reaction thymidine + ATP = dTMP + ADP + H(+). The protein is Thymidine kinase of Mesoplasma florum (strain ATCC 33453 / NBRC 100688 / NCTC 11704 / L1) (Acholeplasma florum).